Consider the following 1437-residue polypeptide: DNA polymerase III PolC-type (1437 aa).

The 157-residue stretch at 420-576 (YVIFDVETTG…YDSETTGHLC (157 aa)) folds into the Exonuclease domain.

This sequence belongs to the DNA polymerase type-C family. PolC subfamily.

The protein localises to the cytoplasm. It carries out the reaction DNA(n) + a 2'-deoxyribonucleoside 5'-triphosphate = DNA(n+1) + diphosphate. Required for replicative DNA synthesis. This DNA polymerase also exhibits 3' to 5' exonuclease activity. This Pediococcus pentosaceus (strain ATCC 25745 / CCUG 21536 / LMG 10740 / 183-1w) protein is DNA polymerase III PolC-type.